A 153-amino-acid chain; its full sequence is MISQSTLFLFILLIIGLIAKNQSLTVAIGVLFLLKFTFLGDKVFPYLQTKGINLGVTVITIAVLVPIATGEIGFKQLGEAAKSYYAWIALASGVAVALLAKGGVQLLTTDPHITTALVFGTIIAVALFNGVAVGPLIGAGIAYAVMSIIQMFK.

The next 4 helical transmembrane spans lie at 8–28 (FLFI…TVAI), 54–74 (LGVT…EIGF), 87–107 (WIAL…VQLL), and 117–137 (LVFG…GPLI).

The protein belongs to the UPF0756 family.

It localises to the cell membrane. The chain is UPF0756 membrane protein BA_4840/GBAA_4840/BAS4489 from Bacillus anthracis.